The primary structure comprises 132 residues: Small ribosomal subunit protein eS6 (132 aa).

This sequence belongs to the eukaryotic ribosomal protein eS6 family.

The sequence is that of Small ribosomal subunit protein eS6 from Methanoculleus marisnigri (strain ATCC 35101 / DSM 1498 / JR1).